We begin with the raw amino-acid sequence, 409 residues long: AT-rich interactive domain-containing protein 3C (409 aa).

Low complexity predominate over residues 1-14 (MEALQRQQAARLAQ). The interval 1-91 (MEALQRQQAA…SPSSQSPGIQ (91 aa)) is disordered. Pro residues predominate over residues 19 to 30 (LAPPRLPLPQPP). The segment covering 49–70 (AEEEEGAEDEEGETPLAEEETA) has biased composition (acidic residues). One can recognise an ARID domain in the interval 110–202 (DPKRKEFLDD…YLYPYECETR (93 aa)). 3 disordered regions span residues 233–274 (NLAG…PAHA), 306–333 (TREK…RLGA), and 385–409 (PVPA…STLP). A compositionally biased stretch (low complexity) spans 235–257 (AGPTPRGAPGPASSHGPAPTATP). In terms of domain architecture, REKLES spans 301 to 386 (LASEATREKL…GILFARRQPV (86 aa)). Over residues 306–320 (TREKLAPEEPPEKRA) the composition is skewed to basic and acidic residues. The span at 393–402 (TNPPPLPSTG) shows a compositional bias: pro residues.

As to quaternary structure, interacts (via REKLES DOMAIN) with NPM1; the interaction mediates ARID3C nuclear shuttling.

The protein resides in the nucleus. Its function is as follows. Transcription factor involved in monocyte-to-macrophage differentiation. Forms a complex with NPM1 to translocate to the nucleus, acting as a transcription factor that promotes the expression of the genes involved in macrophage differentiation, such as STAT3, STAT1 and JUNB. In Mus musculus (Mouse), this protein is AT-rich interactive domain-containing protein 3C (Arid3c).